Reading from the N-terminus, the 224-residue chain is Phosphoribosylformylglycinamidine synthase subunit PurQ (224 aa).

A Glutamine amidotransferase type-1 domain is found at 4-224; sequence RIGIITFPGT…YSVLDGVLAG (221 aa). The Nucleophile role is filled by Cys-87. Residues His-195 and Glu-197 contribute to the active site.

In terms of assembly, part of the FGAM synthase complex composed of 1 PurL, 1 PurQ and 2 PurS subunits.

It localises to the cytoplasm. It carries out the reaction N(2)-formyl-N(1)-(5-phospho-beta-D-ribosyl)glycinamide + L-glutamine + ATP + H2O = 2-formamido-N(1)-(5-O-phospho-beta-D-ribosyl)acetamidine + L-glutamate + ADP + phosphate + H(+). It catalyses the reaction L-glutamine + H2O = L-glutamate + NH4(+). It participates in purine metabolism; IMP biosynthesis via de novo pathway; 5-amino-1-(5-phospho-D-ribosyl)imidazole from N(2)-formyl-N(1)-(5-phospho-D-ribosyl)glycinamide: step 1/2. In terms of biological role, part of the phosphoribosylformylglycinamidine synthase complex involved in the purines biosynthetic pathway. Catalyzes the ATP-dependent conversion of formylglycinamide ribonucleotide (FGAR) and glutamine to yield formylglycinamidine ribonucleotide (FGAM) and glutamate. The FGAM synthase complex is composed of three subunits. PurQ produces an ammonia molecule by converting glutamine to glutamate. PurL transfers the ammonia molecule to FGAR to form FGAM in an ATP-dependent manner. PurS interacts with PurQ and PurL and is thought to assist in the transfer of the ammonia molecule from PurQ to PurL. The protein is Phosphoribosylformylglycinamidine synthase subunit PurQ of Mycolicibacterium paratuberculosis (strain ATCC BAA-968 / K-10) (Mycobacterium paratuberculosis).